A 306-amino-acid polypeptide reads, in one-letter code: Ribosomal protein L11 methyltransferase (306 aa).

Thr139, Gly173, Asp195, and Asn242 together coordinate S-adenosyl-L-methionine.

The protein belongs to the methyltransferase superfamily. PrmA family.

It is found in the cytoplasm. The catalysed reaction is L-lysyl-[protein] + 3 S-adenosyl-L-methionine = N(6),N(6),N(6)-trimethyl-L-lysyl-[protein] + 3 S-adenosyl-L-homocysteine + 3 H(+). Its function is as follows. Methylates ribosomal protein L11. The chain is Ribosomal protein L11 methyltransferase from Nostoc sp. (strain PCC 7120 / SAG 25.82 / UTEX 2576).